Reading from the N-terminus, the 179-residue chain is ATP synthase subunit delta (179 aa).

This sequence belongs to the ATPase delta chain family. In terms of assembly, F-type ATPases have 2 components, F(1) - the catalytic core - and F(0) - the membrane proton channel. F(1) has five subunits: alpha(3), beta(3), gamma(1), delta(1), epsilon(1). F(0) has three main subunits: a(1), b(2) and c(10-14). The alpha and beta chains form an alternating ring which encloses part of the gamma chain. F(1) is attached to F(0) by a central stalk formed by the gamma and epsilon chains, while a peripheral stalk is formed by the delta and b chains.

The protein localises to the cell membrane. Its function is as follows. F(1)F(0) ATP synthase produces ATP from ADP in the presence of a proton or sodium gradient. F-type ATPases consist of two structural domains, F(1) containing the extramembraneous catalytic core and F(0) containing the membrane proton channel, linked together by a central stalk and a peripheral stalk. During catalysis, ATP synthesis in the catalytic domain of F(1) is coupled via a rotary mechanism of the central stalk subunits to proton translocation. In terms of biological role, this protein is part of the stalk that links CF(0) to CF(1). It either transmits conformational changes from CF(0) to CF(1) or is implicated in proton conduction. This Staphylococcus saprophyticus subsp. saprophyticus (strain ATCC 15305 / DSM 20229 / NCIMB 8711 / NCTC 7292 / S-41) protein is ATP synthase subunit delta.